A 204-amino-acid chain; its full sequence is dITP/XTP pyrophosphatase (204 aa).

14-19 (THNKGK) is a binding site for substrate. Mg(2+) contacts are provided by E46 and D75. Residue D75 is the Proton acceptor of the active site. Substrate is bound by residues S76, 161 to 164 (FGYD), K184, and 189 to 190 (HR).

This sequence belongs to the HAM1 NTPase family. In terms of assembly, homodimer. The cofactor is Mg(2+).

The catalysed reaction is XTP + H2O = XMP + diphosphate + H(+). It carries out the reaction dITP + H2O = dIMP + diphosphate + H(+). It catalyses the reaction ITP + H2O = IMP + diphosphate + H(+). Pyrophosphatase that catalyzes the hydrolysis of nucleoside triphosphates to their monophosphate derivatives, with a high preference for the non-canonical purine nucleotides XTP (xanthosine triphosphate), dITP (deoxyinosine triphosphate) and ITP. Seems to function as a house-cleaning enzyme that removes non-canonical purine nucleotides from the nucleotide pool, thus preventing their incorporation into DNA/RNA and avoiding chromosomal lesions. This chain is dITP/XTP pyrophosphatase, found in Ruegeria pomeroyi (strain ATCC 700808 / DSM 15171 / DSS-3) (Silicibacter pomeroyi).